Reading from the N-terminus, the 155-residue chain is Troponin C, isoform 3 (155 aa).

EF-hand domains lie at 11–46 (EQIA…MGQP), 47–82 (FDKK…FIVE), 87–122 (AMQK…LDDQ), and 123–155 (LTEQ…MTGE). Asp60, Asp62, Ser64, Arg66, and Glu71 together coordinate Ca(2+). Residues Asp136, Asp138, Ser140, Thr142, and Glu147 each coordinate Ca(2+).

The protein belongs to the troponin C family. In terms of tissue distribution, present in both larval and adult muscles.

The protein is Troponin C, isoform 3 (TpnC73F) of Drosophila melanogaster (Fruit fly).